Here is a 204-residue protein sequence, read N- to C-terminus: Dihydroorotase (204 aa).

H34 contacts Zn(2+). L79 contacts substrate. Residue D107 coordinates Zn(2+). The active site involves D107. H111 and A123 together coordinate substrate.

The protein belongs to the metallo-dependent hydrolases superfamily. DHOase family. Class II DHOase subfamily. Homodimer. Requires Zn(2+) as cofactor.

It catalyses the reaction (S)-dihydroorotate + H2O = N-carbamoyl-L-aspartate + H(+). It functions in the pathway pyrimidine metabolism; UMP biosynthesis via de novo pathway; (S)-dihydroorotate from bicarbonate: step 3/3. In terms of biological role, catalyzes the reversible cyclization of carbamoyl aspartate to dihydroorotate. The chain is Dihydroorotase from Serratia marcescens.